A 451-amino-acid polypeptide reads, in one-letter code: Phenolic glucoside malonyltransferase 2 (451 aa).

The active-site Proton acceptor is His165. The HXXXD motif signature appears at 165 to 169 (HAVLD). Malonyl-CoA is bound by residues His270 and 272–273 (ST). The active-site Proton acceptor is Asp395. The DFGWG motif signature appears at 395–399 (DFGWG).

It belongs to the plant acyltransferase family. Phenolic glucoside malonyltransferase subfamily.

The catalysed reaction is a flavonol 7-O-beta-D-glucoside + malonyl-CoA = a flavonol 7-O-(6-O-malonyl-beta-D-glucoside) + CoA. Malonyltransferase acting on xenobiotic glucosides. Has activity toward 2-Naphthol glucoside (2NAG), 1-Naphthol glucoside (1NAG), kaempferol 7-O-glucoside, hydroxycoumarin glucosides and phenol-glucosides, but not toward kaempferol 3-O-glucoside or daidzin. Prefers phenol glucosides rather than naphtol glucosides. In vivo, seems to be involved in the malonylation of 4-methylumbelliferone glucoside or 4-nitrophenyl glucoside while PMAT1 would be involved in the malonylation of 2-Naphthol glucoside. This is Phenolic glucoside malonyltransferase 2 (PMAT2) from Arabidopsis thaliana (Mouse-ear cress).